A 304-amino-acid polypeptide reads, in one-letter code: GTP cyclohydrolase FolE2 (304 aa).

This sequence belongs to the GTP cyclohydrolase IV family.

The catalysed reaction is GTP + H2O = 7,8-dihydroneopterin 3'-triphosphate + formate + H(+). The protein operates within cofactor biosynthesis; 7,8-dihydroneopterin triphosphate biosynthesis; 7,8-dihydroneopterin triphosphate from GTP: step 1/1. Its function is as follows. Converts GTP to 7,8-dihydroneopterin triphosphate. This Bdellovibrio bacteriovorus (strain ATCC 15356 / DSM 50701 / NCIMB 9529 / HD100) protein is GTP cyclohydrolase FolE2.